Here is a 252-residue protein sequence, read N- to C-terminus: Ubiquinone/menaquinone biosynthesis C-methyltransferase UbiE (252 aa).

S-adenosyl-L-methionine contacts are provided by residues Thr-75, Asp-96, and 123–124; that span reads NA.

The protein belongs to the class I-like SAM-binding methyltransferase superfamily. MenG/UbiE family.

The enzyme catalyses a 2-demethylmenaquinol + S-adenosyl-L-methionine = a menaquinol + S-adenosyl-L-homocysteine + H(+). It carries out the reaction a 2-methoxy-6-(all-trans-polyprenyl)benzene-1,4-diol + S-adenosyl-L-methionine = a 5-methoxy-2-methyl-3-(all-trans-polyprenyl)benzene-1,4-diol + S-adenosyl-L-homocysteine + H(+). Its pathway is quinol/quinone metabolism; menaquinone biosynthesis; menaquinol from 1,4-dihydroxy-2-naphthoate: step 2/2. It participates in cofactor biosynthesis; ubiquinone biosynthesis. Methyltransferase required for the conversion of demethylmenaquinol (DMKH2) to menaquinol (MKH2) and the conversion of 2-polyprenyl-6-methoxy-1,4-benzoquinol (DDMQH2) to 2-polyprenyl-3-methyl-6-methoxy-1,4-benzoquinol (DMQH2). The sequence is that of Ubiquinone/menaquinone biosynthesis C-methyltransferase UbiE from Methylobacterium nodulans (strain LMG 21967 / CNCM I-2342 / ORS 2060).